Here is a 413-residue protein sequence, read N- to C-terminus: Tyrosine--tRNA ligase (413 aa).

Residues 60-69 (PTAPDIHIGH) carry the 'HIGH' region motif. Positions 244–248 (KMSKS) match the 'KMSKS' region motif. Lysine 247 is a binding site for ATP. The S4 RNA-binding domain maps to 352–412 (LGIAQLLKQA…GKRRFARVTL (61 aa)).

This sequence belongs to the class-I aminoacyl-tRNA synthetase family. TyrS type 2 subfamily. As to quaternary structure, homodimer.

It is found in the cytoplasm. It catalyses the reaction tRNA(Tyr) + L-tyrosine + ATP = L-tyrosyl-tRNA(Tyr) + AMP + diphosphate + H(+). In terms of biological role, catalyzes the attachment of tyrosine to tRNA(Tyr) in a two-step reaction: tyrosine is first activated by ATP to form Tyr-AMP and then transferred to the acceptor end of tRNA(Tyr). The sequence is that of Tyrosine--tRNA ligase from Cupriavidus pinatubonensis (strain JMP 134 / LMG 1197) (Cupriavidus necator (strain JMP 134)).